The sequence spans 171 residues: S-ribosylhomocysteine lyase (171 aa).

Fe cation contacts are provided by His54, His58, and Cys128.

This sequence belongs to the LuxS family. As to quaternary structure, homodimer. Fe cation serves as cofactor.

The catalysed reaction is S-(5-deoxy-D-ribos-5-yl)-L-homocysteine = (S)-4,5-dihydroxypentane-2,3-dione + L-homocysteine. In terms of biological role, involved in the synthesis of autoinducer 2 (AI-2) which is secreted by bacteria and is used to communicate both the cell density and the metabolic potential of the environment. The regulation of gene expression in response to changes in cell density is called quorum sensing. Catalyzes the transformation of S-ribosylhomocysteine (RHC) to homocysteine (HC) and 4,5-dihydroxy-2,3-pentadione (DPD). The polypeptide is S-ribosylhomocysteine lyase (Pectobacterium carotovorum subsp. carotovorum (strain PC1)).